Here is a 284-residue protein sequence, read N- to C-terminus: MTAVKARAYWQLMRMDRPIGSLLLLWPTLWALLLAAQGLPDLRVLVVFVLGVFLMRSAGCVINDYADRHVDGHVKRTSQRPLPAGLVSAKEALLLFVLLAVSSFLLVLTMNTLTIQLSFIGILLAFVYPFMKRFTHLPQLVLGLAFSWSIPMAWAAQANTLTPQVWVLFLINALWTIAYDTQYAMVDRDDDVKIGIKSTAILFGRWDKRIIGLLQLATLSLLVALGQGLALGTSYYWGLLIAAGLFAYQQHLIRYRERMPCFQAFLNNNYVGMAITAGILLSVW.

Transmembrane regions (helical) follow at residues 19 to 39 (IGSL…AQGL), 42 to 62 (LRVL…GCVI), 93 to 113 (LLLF…MNTL), 114 to 134 (TIQL…MKRF), 136 to 156 (HLPQ…AWAA), 158 to 178 (ANTL…WTIA), 210 to 230 (IIGL…QGLA), 233 to 253 (TSYY…QHLI), and 264 to 284 (AFLN…LSVW).

The protein belongs to the UbiA prenyltransferase family. It depends on Mg(2+) as a cofactor.

The protein localises to the cell inner membrane. The enzyme catalyses all-trans-octaprenyl diphosphate + 4-hydroxybenzoate = 4-hydroxy-3-(all-trans-octaprenyl)benzoate + diphosphate. The protein operates within cofactor biosynthesis; ubiquinone biosynthesis. In terms of biological role, catalyzes the prenylation of para-hydroxybenzoate (PHB) with an all-trans polyprenyl group. Mediates the second step in the final reaction sequence of ubiquinone-8 (UQ-8) biosynthesis, which is the condensation of the polyisoprenoid side chain with PHB, generating the first membrane-bound Q intermediate 3-octaprenyl-4-hydroxybenzoate. In Vibrio cholerae serotype O1 (strain ATCC 39541 / Classical Ogawa 395 / O395), this protein is 4-hydroxybenzoate octaprenyltransferase.